Reading from the N-terminus, the 76-residue chain is ATP synthase subunit 9, mitochondrial (76 aa).

A run of 2 helical transmembrane segments spans residues Ile11–Phe31 and Ile53–Ile73.

The protein belongs to the ATPase C chain family. F-type ATPases have 2 components, CF(1) - the catalytic core - and CF(0) - the membrane proton channel. CF(1) has five subunits: alpha(3), beta(3), gamma(1), delta(1), epsilon(1). CF(0) has three main subunits: a, b and c.

It localises to the mitochondrion membrane. Functionally, this protein is one of the chains of the nonenzymatic membrane component (F0) of mitochondrial ATPase. The chain is ATP synthase subunit 9, mitochondrial (ATP9) from Chondrus crispus (Carrageen Irish moss).